The following is a 97-amino-acid chain: Co-chaperonin GroES (97 aa).

Belongs to the GroES chaperonin family. As to quaternary structure, heptamer of 7 subunits arranged in a ring. Interacts with the chaperonin GroEL.

Its subcellular location is the cytoplasm. Together with the chaperonin GroEL, plays an essential role in assisting protein folding. The GroEL-GroES system forms a nano-cage that allows encapsulation of the non-native substrate proteins and provides a physical environment optimized to promote and accelerate protein folding. GroES binds to the apical surface of the GroEL ring, thereby capping the opening of the GroEL channel. This chain is Co-chaperonin GroES, found in Pseudomonas aeruginosa (strain LESB58).